Reading from the N-terminus, the 317-residue chain is Ribosomal protein L11 methyltransferase (317 aa).

S-adenosyl-L-methionine is bound by residues Thr-158, Gly-179, Asp-201, and Asn-244.

It belongs to the methyltransferase superfamily. PrmA family.

It localises to the cytoplasm. It catalyses the reaction L-lysyl-[protein] + 3 S-adenosyl-L-methionine = N(6),N(6),N(6)-trimethyl-L-lysyl-[protein] + 3 S-adenosyl-L-homocysteine + 3 H(+). Methylates ribosomal protein L11. The chain is Ribosomal protein L11 methyltransferase from Streptococcus uberis (strain ATCC BAA-854 / 0140J).